The sequence spans 235 residues: Cytidylate kinase (235 aa).

Position 11 to 19 (11 to 19 (GPSGVGKST)) interacts with ATP.

The protein belongs to the cytidylate kinase family. Type 1 subfamily.

It localises to the cytoplasm. It carries out the reaction CMP + ATP = CDP + ADP. The enzyme catalyses dCMP + ATP = dCDP + ADP. The polypeptide is Cytidylate kinase (Syntrophotalea carbinolica (strain DSM 2380 / NBRC 103641 / GraBd1) (Pelobacter carbinolicus)).